Reading from the N-terminus, the 338-residue chain is Ketol-acid reductoisomerase (NADP(+)) (338 aa).

Positions 1–181 (MKVFYDKDAD…GGGRAGIIET (181 aa)) constitute a KARI N-terminal Rossmann domain. Residues 24 to 27 (YGSQ), R47, and S52 each bind NADP(+). H107 is an active-site residue. NADP(+) is bound at residue G133. One can recognise a KARI C-terminal knotted domain in the interval 182-327 (NFREETETDL…AKLRSMMPWI (146 aa)). Mg(2+) contacts are provided by D190, E194, E226, and E230. S251 provides a ligand contact to substrate.

Belongs to the ketol-acid reductoisomerase family. Requires Mg(2+) as cofactor.

The catalysed reaction is (2R)-2,3-dihydroxy-3-methylbutanoate + NADP(+) = (2S)-2-acetolactate + NADPH + H(+). The enzyme catalyses (2R,3R)-2,3-dihydroxy-3-methylpentanoate + NADP(+) = (S)-2-ethyl-2-hydroxy-3-oxobutanoate + NADPH + H(+). It participates in amino-acid biosynthesis; L-isoleucine biosynthesis; L-isoleucine from 2-oxobutanoate: step 2/4. The protein operates within amino-acid biosynthesis; L-valine biosynthesis; L-valine from pyruvate: step 2/4. Functionally, involved in the biosynthesis of branched-chain amino acids (BCAA). Catalyzes an alkyl-migration followed by a ketol-acid reduction of (S)-2-acetolactate (S2AL) to yield (R)-2,3-dihydroxy-isovalerate. In the isomerase reaction, S2AL is rearranged via a Mg-dependent methyl migration to produce 3-hydroxy-3-methyl-2-ketobutyrate (HMKB). In the reductase reaction, this 2-ketoacid undergoes a metal-dependent reduction by NADPH to yield (R)-2,3-dihydroxy-isovalerate. The protein is Ketol-acid reductoisomerase (NADP(+)) of Paraburkholderia phytofirmans (strain DSM 17436 / LMG 22146 / PsJN) (Burkholderia phytofirmans).